A 291-amino-acid polypeptide reads, in one-letter code: tRNA dimethylallyltransferase (291 aa).

9-16 is an ATP binding site; that stretch reads GPTASGKT. 11 to 16 is a substrate binding site; sequence TASGKT. The interaction with substrate tRNA stretch occupies residues 34–37; sequence DSLQ.

It belongs to the IPP transferase family. Monomer. It depends on Mg(2+) as a cofactor.

The catalysed reaction is adenosine(37) in tRNA + dimethylallyl diphosphate = N(6)-dimethylallyladenosine(37) in tRNA + diphosphate. Its function is as follows. Catalyzes the transfer of a dimethylallyl group onto the adenine at position 37 in tRNAs that read codons beginning with uridine, leading to the formation of N6-(dimethylallyl)adenosine (i(6)A). This chain is tRNA dimethylallyltransferase, found in Onion yellows phytoplasma (strain OY-M).